The chain runs to 187 residues: Orotate phosphoribosyltransferase (187 aa).

5-phospho-alpha-D-ribose 1-diphosphate is bound by residues R103, K104, K107, and 129-137; that span reads EDVTTSGGS. Residues T133 and R161 each coordinate orotate.

This sequence belongs to the purine/pyrimidine phosphoribosyltransferase family. PyrE subfamily. Homodimer. Mg(2+) is required as a cofactor.

The catalysed reaction is orotidine 5'-phosphate + diphosphate = orotate + 5-phospho-alpha-D-ribose 1-diphosphate. It functions in the pathway pyrimidine metabolism; UMP biosynthesis via de novo pathway; UMP from orotate: step 1/2. Its function is as follows. Catalyzes the transfer of a ribosyl phosphate group from 5-phosphoribose 1-diphosphate to orotate, leading to the formation of orotidine monophosphate (OMP). This Methanosarcina mazei (strain ATCC BAA-159 / DSM 3647 / Goe1 / Go1 / JCM 11833 / OCM 88) (Methanosarcina frisia) protein is Orotate phosphoribosyltransferase.